Reading from the N-terminus, the 88-residue chain is GYLGGYAAPAVAVAPAPALAVAHAPAVVVATSYARISQVTNSVPIAVAAPAVPKAAVPVAAPVVAAAPVIAAHAPLALGHGFGYGGYH.

A run of 5 repeats spans residues 7–10, 48–51, 55–58, 60–63, and 66–69.

Component of the cuticle of migratory locust which contains more than 100 different structural proteins. This chain is Cuticle protein 70, isoforms A and B, found in Locusta migratoria (Migratory locust).